Consider the following 439-residue polypeptide: ATP-dependent RNA helicase SrmB (439 aa).

The Q motif signature appears at 4-32 (SQFEQFDLSPELLKALEKKGYSRPTAIQM). The Helicase ATP-binding domain occupies 35–209 (IPAAMEESDV…AERLLNDPVK (175 aa)). 48–55 (APTGTGKT) provides a ligand contact to ATP. The short motif at 157-160 (DEAD) is the DEAD box element. Positions 237 to 387 (KLLARFIETE…GLEPRTKPPK (151 aa)) constitute a Helicase C-terminal domain. The span at 381-393 (PRTKPPKDGEVKS) shows a compositional bias: basic and acidic residues. A disordered region spans residues 381 to 439 (PRTKPPKDGEVKSVSKKQKARIKEKREEKKKTEAKKKVKLRHKDTKNIGKRRKPSNSNV). Basic residues-rich tracts occupy residues 394 to 403 (VSKKQKARIK) and 412 to 439 (TEAK…NSNV).

Belongs to the DEAD box helicase family. SrmB subfamily. Interacts with the 50S ribosomal subunit.

Its subcellular location is the cytoplasm. It catalyses the reaction ATP + H2O = ADP + phosphate + H(+). In terms of biological role, DEAD-box RNA helicase involved in the assembly of the 50S ribosomal subunit at low temperature. Exhibits RNA-stimulated ATP hydrolysis and RNA unwinding activity. The polypeptide is ATP-dependent RNA helicase SrmB (Haemophilus influenzae (strain ATCC 51907 / DSM 11121 / KW20 / Rd)).